We begin with the raw amino-acid sequence, 448 residues long: Exodeoxyribonuclease 7 large subunit (448 aa).

It belongs to the XseA family. Heterooligomer composed of large and small subunits.

The protein resides in the cytoplasm. It catalyses the reaction Exonucleolytic cleavage in either 5'- to 3'- or 3'- to 5'-direction to yield nucleoside 5'-phosphates.. Its function is as follows. Bidirectionally degrades single-stranded DNA into large acid-insoluble oligonucleotides, which are then degraded further into small acid-soluble oligonucleotides. The polypeptide is Exodeoxyribonuclease 7 large subunit (Geobacillus kaustophilus (strain HTA426)).